We begin with the raw amino-acid sequence, 465 residues long: MRGASGESVLPEDLRSRVLERIRPTRLQFSMLGRLYSLVARALEECEDLRLSIPSYRVELVGSAAKGTLLRDKWEVDVFLLLDAPREEVRRLGESLLRSCLGGRLPYYFKYSEHPYATVSLMGMQADVVPAPLAVDPRDAVGVERTPFHTRYVRSRLEERPWLVDDILLFKSFLKGIGVYGAETRVGGFSGYLAEVLIIHHGGFEETVKAASSWRPPVMVDTTSGKADLDMLARRYPDSPIIVPDPVDPSRNTAASVTPKRLAELVHAANIFLRKPSPTFFHALQPGEPCRRTLPGVMVLMSGNYSDHPPDSVWGRLKRLGERLYRATKARGYPALSYSFYTDEALEAAVYIHMESPSRYPIEGRLGPPPWERERAARFTEKRLGEGGWVWIGDDGRLSGARPYTGSAAGDVERALATLPLPPGTRSYKVVTCPSTGPCGFPSYLEALRDPTPPWLRHVLGGCRS.

2 residues coordinate ATP: S63 and K66. CTP-binding residues include S63 and K66. Residues E75, D77, and D127 each contribute to the Mg(2+) site. ATP is bound by residues H149, K171, and Y180. 3 residues coordinate CTP: H149, K171, and Y180.

It belongs to the tRNA nucleotidyltransferase/poly(A) polymerase family. Archaeal CCA-adding enzyme subfamily. As to quaternary structure, homodimer. Mg(2+) serves as cofactor.

It catalyses the reaction a tRNA precursor + 2 CTP + ATP = a tRNA with a 3' CCA end + 3 diphosphate. It carries out the reaction a tRNA with a 3' CCA end + 2 CTP + ATP = a tRNA with a 3' CCACCA end + 3 diphosphate. In terms of biological role, catalyzes the addition and repair of the essential 3'-terminal CCA sequence in tRNAs without using a nucleic acid template. Adds these three nucleotides in the order of C, C, and A to the tRNA nucleotide-73, using CTP and ATP as substrates and producing inorganic pyrophosphate. tRNA 3'-terminal CCA addition is required both for tRNA processing and repair. Also involved in tRNA surveillance by mediating tandem CCA addition to generate a CCACCA at the 3' terminus of unstable tRNAs. While stable tRNAs receive only 3'-terminal CCA, unstable tRNAs are marked with CCACCA and rapidly degraded. In Aeropyrum pernix (strain ATCC 700893 / DSM 11879 / JCM 9820 / NBRC 100138 / K1), this protein is CCA-adding enzyme.